Reading from the N-terminus, the 212-residue chain is uncharacterized protein (212 aa).

Positions 1–18 are cleaved as a signal peptide; sequence MQLTQVLAVAILAAGVSA. Residues 108–180 are disordered; sequence VSHNRVNAKQ…KDYGHKDYGH (73 aa). A compositionally biased stretch (basic and acidic residues) spans 117–180; sequence QRRDDKKDYG…KDYGHKDYGH (64 aa). A 15 X 5 AA tandem repeats of K-D-Y-G-H region spans residues 120–210; it reads DDKKDYGKND…KDYGYKGYDD (91 aa). Repeat 1 spans residues 123–127; sequence KDYGK. Residues 128-132 form a 2; truncated repeat; sequence NDYGK. A run of 3 repeats spans residues 133 to 137, 138 to 142, and 143 to 147. The stretch at 148 to 152 is one 6; truncated repeat; the sequence is KEYDP. Repeat copies occupy residues 166–170, 171–175, 176–180, 181–185, and 186–190. A 12; truncated repeat occupies 191–195; sequence DDYGY. Residues 196 to 200 form a 13; truncated repeat; that stretch reads KGYDD. A 14; truncated repeat occupies 201-205; sequence KDYGY. The 15; truncated repeat unit spans residues 206–210; the sequence is KGYDD.

The protein localises to the secreted. This is an uncharacterized protein from Arthroderma benhamiae (strain ATCC MYA-4681 / CBS 112371) (Trichophyton mentagrophytes).